A 670-amino-acid chain; its full sequence is tRNA 5-methylaminomethyl-2-thiouridine biosynthesis bifunctional protein MnmC (670 aa).

Residues Met-1 to Ile-242 are tRNA (mnm(5)s(2)U34)-methyltransferase. Positions Ile-269–Glu-670 are FAD-dependent cmnm(5)s(2)U34 oxidoreductase.

This sequence in the N-terminal section; belongs to the methyltransferase superfamily. tRNA (mnm(5)s(2)U34)-methyltransferase family. In the C-terminal section; belongs to the DAO family. FAD serves as cofactor.

The protein localises to the cytoplasm. The catalysed reaction is 5-aminomethyl-2-thiouridine(34) in tRNA + S-adenosyl-L-methionine = 5-methylaminomethyl-2-thiouridine(34) in tRNA + S-adenosyl-L-homocysteine + H(+). Catalyzes the last two steps in the biosynthesis of 5-methylaminomethyl-2-thiouridine (mnm(5)s(2)U) at the wobble position (U34) in tRNA. Catalyzes the FAD-dependent demodification of cmnm(5)s(2)U34 to nm(5)s(2)U34, followed by the transfer of a methyl group from S-adenosyl-L-methionine to nm(5)s(2)U34, to form mnm(5)s(2)U34. This chain is tRNA 5-methylaminomethyl-2-thiouridine biosynthesis bifunctional protein MnmC, found in Haemophilus influenzae (strain ATCC 51907 / DSM 11121 / KW20 / Rd).